Here is a 436-residue protein sequence, read N- to C-terminus: MANIFEVPQPGNDLLEKANKVRLASIEISQTENQNRIKALNFMADYLEKNSYEILDANNADYSSAQKKGISRALLSRLKLSKLKLNSGIEGVRKVGDLADPVNQVQIKRELSKGLFLERKTVPIGVLGVIFESRPDAVMQISSLAIRSGNGVMLKGGSEANLTNTAIVKALQEGLNASGLDKNAICLLTSRKDSMAMLNLEKYINLIIPRGSNELVKFIQENTRIPVLGHADGICHLFIDIEANLEMALSVALDSKIQYPAACNAIETLLLHKDIAPTFLEKAIPLFKSNDVKLIGDMRSVELGVKYEASLEDWKTEYLDLILSIKIVDDLEEAITHIQKYSSKHTDGIITENSHTANKFMNVIDSAGVFHNCSTRFADGFRYGFGAEVGISTQTLPPRGPVGLEGLVTYKYFLKGDGNIVDDFSSGKAIYTHKDL.

The protein belongs to the gamma-glutamyl phosphate reductase family.

Its subcellular location is the cytoplasm. It catalyses the reaction L-glutamate 5-semialdehyde + phosphate + NADP(+) = L-glutamyl 5-phosphate + NADPH + H(+). It functions in the pathway amino-acid biosynthesis; L-proline biosynthesis; L-glutamate 5-semialdehyde from L-glutamate: step 2/2. Its function is as follows. Catalyzes the NADPH-dependent reduction of L-glutamate 5-phosphate into L-glutamate 5-semialdehyde and phosphate. The product spontaneously undergoes cyclization to form 1-pyrroline-5-carboxylate. This is Gamma-glutamyl phosphate reductase from Prochlorococcus marinus (strain AS9601).